Reading from the N-terminus, the 80-residue chain is Metallothionein-like protein 1 (80 aa).

This sequence belongs to the metallothionein superfamily. Type 15 family.

In terms of biological role, metallothioneins have a high content of cysteine residues that bind various heavy metals. The sequence is that of Metallothionein-like protein 1 (METAL1) from Coffea arabica (Arabian coffee).